We begin with the raw amino-acid sequence, 261 residues long: Endonuclease NucS (261 aa).

Belongs to the NucS endonuclease family.

It is found in the cytoplasm. In terms of biological role, cleaves both 3' and 5' ssDNA extremities of branched DNA structures. The sequence is that of Endonuclease NucS from Aeropyrum pernix (strain ATCC 700893 / DSM 11879 / JCM 9820 / NBRC 100138 / K1).